A 2513-amino-acid polypeptide reads, in one-letter code: Polyprotein P1234 (2513 aa).

The Alphavirus-like MT domain maps to 28–259 (EPKQVTPNDH…ESRKLLQSWH (232 aa)). The segment at 244 to 263 (GSTLYPESRKLLQSWHLPSV) is nsP1 membrane-binding. S-palmitoyl cysteine; by host attachment occurs at residues Cys417 and Cys419. The (+)RNA virus helicase ATP-binding domain occupies 690 to 842 (DLTSPPYHEF…HNICTQVYHK (153 aa)). 721 to 728 (GVPGSGKS) is an a ribonucleoside 5'-triphosphate binding site. The (+)RNA virus helicase C-terminal domain maps to 843–991 (SISRRCTLPV…IKEWEAEHAS (149 aa)). In terms of domain architecture, Peptidase C9 spans 1004-1327 (DTFQNKANVC…NQLNAVYAGL (324 aa)). The interval 1005-1024 (TFQNKANVCWAKCLVPILDT) is nucleolus localization signal. The For cysteine protease nsP2 activity role is filled by Cys1013. Residues 1058–1067 (TRIYGVDLDS) carry the Nuclear export signal motif. His1083 functions as the For cysteine protease nsP2 activity in the catalytic mechanism. A Nuclear localization signal motif is present at residues 1182–1186 (PTKRV). 6 residues coordinate ADP-D-ribose: Asp1343, Asn1357, Gly1365, Gly1445, Val1446, and Tyr1447. Zn(2+) is bound by residues Cys1595, Cys1597, Cys1620, and Cys1638. Short sequence motifs (FGDF; binding to host G3BP1) lie at residues 1851–1854 (FGDF) and 1869–1872 (FGDF). Residues 2267–2382 (DAVLETDIAS…HGVVSDALMA (116 aa)) enclose the RdRp catalytic domain.

Interacts with non-structural protein 3. Interacts with RNA-directed RNA polymerase nsP4. Interacts with protease nsP2. interacts with itself. As to quaternary structure, interacts with mRNA-capping enzyme nsP1. Interacts with host DDX1. Interacts with host DDX3. Interacts (via C-terminus) with host G3BP1; this interaction inhibits the formation of host stress granules on viral mRNAs and the nsp3-G3BP1 complexes bind viral RNAs and probably orchestrate the assembly of viral replication complexes. Interacts (via C-terminus) with host G3BP2; this interaction inhibits the formation of host stress granules on viral mRNAs and the nsp3-G3BP2 complexes bind viral RNAs and probably orchestrate the assembly of viral replication complexes. In terms of assembly, interacts with mRNA-capping enzyme nsP1. Interacts with protease nsP2. interacts with itself. Interacts with RNA-directed RNA polymerase nsP4. Interacts with mRNA-capping enzyme nsP1. Interacts with KPNA1/karyopherin-alpha1; this interaction probably allows the active transport of protease nsP2 into the host nucleus. Mg(2+) is required as a cofactor. Requires Mn(2+) as cofactor. In terms of processing, specific enzymatic cleavages in vivo yield mature proteins. The processing of the polyprotein is temporally regulated. In early stages (1.7 hpi), P1234 is first cleaved in trans through its nsP2 protease activity, releasing P123 and nsP4, which associate to form the early replication complex. At the same time, P1234 is also cut at the nsP1/nsP2 site early in infection but with lower efficiency. After replication of the viral minus-strand RNAs (4 hpi), the polyproteins are cut at the nsP1/nsP2 and nsP2/nsP3 sites very efficiently, preventing accumulation of P123 and P1234 and allowing the formation of the late replication complex. NsP3/nsP4 site is not cleaved anymore and P34 is produced rather than nsP4. Post-translationally, specific enzymatic cleavages in vivo yield mature proteins. The processing of the polyprotein is temporally regulated. In early stages (1.7 hpi), P123 is cleaved at the nsP1/nsP2 site with low efficiency. After replication of the viral minus-strand RNAs (4 hpi), the polyproteins are cut at the nsP1/nsP2 and nsP2/nsP3 sites very efficiently, preventing accumulation of P123 and allowing the formation of the late replication complex. Palmitoylated by host palmitoyltransferases ZDHHC2 and ZDHHC19. In terms of processing, phosphorylated by host on serines and threonines. Post-translationally, ubiquitinated; targets the protein for rapid degradation via the ubiquitin system. Nsp4 is present in extremely low quantities due to low frequency of translation through the amber stop-codon and the degradation by the ubiquitin pathway.

The protein resides in the host cytoplasmic vesicle membrane. Its subcellular location is the host cell membrane. It is found in the host cell projection. The protein localises to the host filopodium. It localises to the host nucleus. The protein resides in the host cytoplasm. The catalysed reaction is GTP + S-adenosyl-L-methionine = N(7)-methyl-GTP + S-adenosyl-L-homocysteine. It catalyses the reaction N(7)-methyl-GTP + L-histidyl-[protein] = N(tele)-(N(7)-methylguanosine 5'-phospho)-L-histidyl-[protein] + diphosphate. It carries out the reaction N(tele)-(N(7)-methylguanosine 5'-phospho)-L-histidyl-[protein] + a 5'-end diphospho-(purine-ribonucleoside) in mRNA + H(+) = a 5'-end (N(7)-methyl 5'-triphosphoguanosine)-(purine-ribonucleoside) in mRNA + L-histidyl-[protein]. The enzyme catalyses a 5'-end triphospho-ribonucleoside in mRNA + H2O = a 5'-end diphospho-ribonucleoside in mRNA + phosphate + H(+). The catalysed reaction is a ribonucleoside 5'-triphosphate + H2O = a ribonucleoside 5'-diphosphate + phosphate + H(+). It catalyses the reaction ATP + H2O = ADP + phosphate + H(+). It carries out the reaction RNA(n) + a ribonucleoside 5'-triphosphate = RNA(n+1) + diphosphate. The enzyme catalyses 4-O-(ADP-D-ribosyl)-L-aspartyl-[protein] + H2O = L-aspartyl-[protein] + ADP-D-ribose + H(+). The catalysed reaction is 5-O-(ADP-D-ribosyl)-L-glutamyl-[protein] + H2O = L-glutamyl-[protein] + ADP-D-ribose + H(+). It catalyses the reaction RNA(n) + ATP = RNA(n)-3'-adenine ribonucleotide + diphosphate. It carries out the reaction ADP-alpha-D-ribose 1''-phosphate + H2O = ADP-D-ribose + phosphate. Functionally, inactive precursor of the viral replicase, which is activated by cleavages carried out by the viral protease nsP2. In terms of biological role, the early replication complex formed by the polyprotein P123 and nsP4 synthesizes minus-strand RNAs. As soon P123 is cleaved into mature proteins, the plus-strand RNAs synthesis begins. Cytoplasmic capping enzyme that catalyzes two virus-specific reactions: methyltransferase and nsP1 guanylyltransferase. mRNA-capping is necessary since all viral RNAs are synthesized in the cytoplasm, and host capping enzymes are restricted to the nucleus. The enzymatic reaction involves a covalent link between 7-methyl-GMP and nsP1, whereas eukaryotic capping enzymes form a covalent complex only with GMP. nsP1 capping consists in the following reactions: GTP is first methylated into 7-methyl-GMP and then is covalently linked to nsP1 to form the m7GMp-nsP1 complex from which 7-methyl-GMP complex is transferred to the mRNA to create the cap structure. NsP1 is also needed for the initiation of the minus-strand RNAs synthesis. Probably serves as a membrane anchor for the replication complex composed of nsP1-nsP4. Palmitoylated nsP1 is remodeling host cell cytoskeleton, and induces filopodium-like structure formation at the surface of the host cell. Its function is as follows. Multifunctional protein whose N-terminus is part of the RNA polymerase complex and displays NTPase, RNA triphosphatase and helicase activities. NTPase and RNA triphosphatase are involved in viral RNA capping and helicase keeps a check on the dsRNA replication intermediates. The C-terminus harbors a protease that specifically cleaves the polyproteins and releases the mature proteins. Required for the shutoff of minus-strand RNAs synthesis. Specifically inhibits the host IFN response by promoting the nuclear export of host STAT1. Also inhibits host transcription by inducing the rapid proteasome-dependent degradation of POLR2A, a catalytic subunit of the RNAPII complex. The resulting inhibition of cellular protein synthesis serves to ensure maximal viral gene expression and to evade host immune response. Functionally, seems to be essential for minus-strand RNAs and subgenomic 26S mRNAs synthesis. Displays mono-ADP-ribosylhydrolase activity. ADP-ribosylation is a post-translational modification that controls various processes of the host cell and the virus probably needs to revert it for optimal viral replication. Binds proteins of G3BP family and sequesters them into the viral RNA replication complexes thereby inhibiting the formation of host stress granules on viral mRNAs. The nsp3-G3BP complexes bind viral RNAs and probably orchestrate the assembly of viral replication complexes, thanks to the ability of G3BP family members to self-assemble and bind DNA. In terms of biological role, RNA dependent RNA polymerase. Replicates genomic and antigenomic RNA by recognizing replications specific signals. The early replication complex formed by the polyprotein P123 and nsP4 synthesizes minus-strand RNAs. The late replication complex composed of fully processed nsP1-nsP4 is responsible for the production of genomic and subgenomic plus-strand RNAs. This chain is Polyprotein P1234, found in Anopheles (Human).